Consider the following 97-residue polypeptide: Large ribosomal subunit protein eL37 (97 aa).

Lys10 is subject to N6-acetyllysine. Residues Cys19, Cys22, Cys34, and Cys37 each coordinate Zn(2+). A C4-type zinc finger spans residues 19-37 (CRRCGSKAYHLQKSTCGKC). Phosphoserine occurs at positions 96 and 97.

This sequence belongs to the eukaryotic ribosomal protein eL37 family. In terms of assembly, component of the large ribosomal subunit.

The protein localises to the cytoplasm. In terms of biological role, component of the large ribosomal subunit. The ribosome is a large ribonucleoprotein complex responsible for the synthesis of proteins in the cell. The sequence is that of Large ribosomal subunit protein eL37 (RPL37) from Bos taurus (Bovine).